The chain runs to 325 residues: Putative gluconeogenesis factor (325 aa).

It belongs to the gluconeogenesis factor family.

It localises to the cytoplasm. Functionally, required for morphogenesis under gluconeogenic growth conditions. This chain is Putative gluconeogenesis factor, found in Streptococcus pyogenes serotype M1.